Reading from the N-terminus, the 479-residue chain is Cardiolipin synthase A (479 aa).

Helical transmembrane passes span 8-28 (FFGY…LHAV) and 38-58 (IAWA…YLVF). PLD phosphodiesterase domains lie at 218–245 (VNFR…GDEY) and 392–419 (QPGF…DNRS). Active-site residues include His-223, Lys-225, Asp-230, His-397, Lys-399, and Asp-404.

Belongs to the phospholipase D family. Cardiolipin synthase subfamily. ClsA sub-subfamily.

Its subcellular location is the cell inner membrane. The enzyme catalyses 2 a 1,2-diacyl-sn-glycero-3-phospho-(1'-sn-glycerol) = a cardiolipin + glycerol. Functionally, catalyzes the reversible phosphatidyl group transfer from one phosphatidylglycerol molecule to another to form cardiolipin (CL) (diphosphatidylglycerol) and glycerol. This chain is Cardiolipin synthase A, found in Pseudomonas putida (strain W619).